We begin with the raw amino-acid sequence, 932 residues long: Receptor-like protein 9a (932 aa).

The signal sequence occupies residues Met1–Cys28. Residues Ile29–Thr888 are Extracellular-facing. Asn53, Asn80, and Asn90 each carry an N-linked (GlcNAc...) asparagine glycan. 28 LRR repeats span residues Phe97–Ser122, Leu126–Ser152, Arg154–Asp174, Leu175–Lys200, His202–Gln222, Leu223–Ser246, Leu247–Ser273, Glu275–Asn295, Leu296–Gln320, Lys322–Gln345, Lys346–Glu368, Tyr370–Val393, His394–Val417, Leu418–Glu441, Lys443–Gly466, Ser468–Leu491, Glu492–Ser514, Gly516–Phe535, Gly536–Asn560, Val561–Phe583, His585–Leu605, Glu606–Arg629, Phe631–Leu652, Lys653–Val676, Phe745–Phe769, Gln770–Asn792, Thr794–Leu817, and Tyr819–Ser842. The N-linked (GlcNAc...) asparagine glycan is linked to Asn140. 2 N-linked (GlcNAc...) asparagine glycosylation sites follow: Asn261 and Asn295. N-linked (GlcNAc...) asparagine glycans are attached at residues Asn352 and Asn380. N-linked (GlcNAc...) asparagine glycans are attached at residues Asn420, Asn425, and Asn454. N-linked (GlcNAc...) asparagine glycans are attached at residues Asn524, Asn551, and Asn560. N-linked (GlcNAc...) asparagine glycans are attached at residues Asn666 and Asn675. N-linked (GlcNAc...) asparagine glycosylation is found at Asn776 and Asn792. N-linked (GlcNAc...) asparagine glycosylation is found at Asn824, Asn829, Asn860, and Asn866. The chain crosses the membrane as a helical span at residues Phe889–Cys909. Residues Phe910–Val932 lie on the Cytoplasmic side of the membrane.

Belongs to the RLP family.

It is found in the cell membrane. This is Receptor-like protein 9a from Arabidopsis thaliana (Mouse-ear cress).